The sequence spans 58 residues: U8-ctenitoxin-Pr1a (58 aa).

5 cysteine pairs are disulfide-bonded: Cys2–Cys16, Cys9–Cys22, Cys15–Cys40, Cys24–Cys38, and Cys48–Cys55.

Expressed by the venom gland.

It is found in the secreted. No toxic effects on mice at dose levels of 5 ug per mouse. May be toxic to insects. This Phoneutria reidyi (Brazilian Amazonian armed spider) protein is U8-ctenitoxin-Pr1a.